The sequence spans 584 residues: 2-succinyl-5-enolpyruvyl-6-hydroxy-3-cyclohexene-1-carboxylate synthase (584 aa).

Belongs to the TPP enzyme family. MenD subfamily. Homodimer. Mg(2+) is required as a cofactor. The cofactor is Mn(2+). Thiamine diphosphate serves as cofactor.

The enzyme catalyses isochorismate + 2-oxoglutarate + H(+) = 5-enolpyruvoyl-6-hydroxy-2-succinyl-cyclohex-3-ene-1-carboxylate + CO2. The protein operates within quinol/quinone metabolism; 1,4-dihydroxy-2-naphthoate biosynthesis; 1,4-dihydroxy-2-naphthoate from chorismate: step 2/7. It functions in the pathway quinol/quinone metabolism; menaquinone biosynthesis. Functionally, catalyzes the thiamine diphosphate-dependent decarboxylation of 2-oxoglutarate and the subsequent addition of the resulting succinic semialdehyde-thiamine pyrophosphate anion to isochorismate to yield 2-succinyl-5-enolpyruvyl-6-hydroxy-3-cyclohexene-1-carboxylate (SEPHCHC). In Bacillus thuringiensis (strain Al Hakam), this protein is 2-succinyl-5-enolpyruvyl-6-hydroxy-3-cyclohexene-1-carboxylate synthase.